The following is a 287-amino-acid chain: Arylamine N-acetyltransferase, liver isozyme (287 aa).

The active-site Acyl-thioester intermediate is Cys-68. Residues His-107 and Asp-122 contribute to the active site.

The protein belongs to the arylamine N-acetyltransferase family.

It catalyses the reaction an arylamine + acetyl-CoA = an N-acetylarylamine + CoA. The protein is Arylamine N-acetyltransferase, liver isozyme of Gallus gallus (Chicken).